A 347-amino-acid polypeptide reads, in one-letter code: Chlorophyllase type 0 (347 aa).

A signal peptide spans 1 to 19 (MAKLLLLIFGVFIFVNSQA). The propeptide occupies 20–30 (QTFPTILEKHN). The GXSXG signature appears at 160–164 (GHSRG). The active-site Nucleophile is the Ser162. Asp191 functions as the Charge relay system in the catalytic mechanism. 3 N-linked (GlcNAc...) asparagine glycosylation sites follow: Asn215, Asn229, and Asn251. His262 serves as the catalytic Charge relay system. Asn321 is a glycosylation site (N-linked (GlcNAc...) asparagine).

This sequence belongs to the AB hydrolase superfamily. Lipase family.

The enzyme catalyses a chlorophyll + H2O = a chlorophyllide + phytol + H(+). It catalyses the reaction chlorophyll a + H2O = phytol + chlorophyllide a + H(+). Its pathway is porphyrin-containing compound metabolism; chlorophyll degradation. With respect to regulation, inhibited by diisopropyl fluorophosphate (DFP), phenylmethanesulfonyl fluoride (PMSF) or p-chloromercuribenzoic acid (PCMB), but not by N-ethylmaleimide (NEM) or iodoacetamide. Its function is as follows. Catalyzes the hydrolysis of ester bond in chlorophyll to yield chlorophyllide and phytol. This Chenopodium album (Fat hen) protein is Chlorophyllase type 0.